Consider the following 668-residue polypeptide: SH2 domain-containing protein B (668 aa).

Positions 373 to 411 (SVSGSEESYQQCNSHPQTSRQFENGNGMRLHEEDNSSID) are disordered. Over residues 374–396 (VSGSEESYQQCNSHPQTSRQFEN) the composition is skewed to polar residues. An SH2 domain is found at 574-642 (WIEGFITKEE…DNICESSERY (69 aa)).

Post-translationally, phosphorylated on tyrosine residues. In terms of tissue distribution, expressed in roots, leaves, stems and flowers.

In Arabidopsis thaliana (Mouse-ear cress), this protein is SH2 domain-containing protein B.